A 306-amino-acid chain; its full sequence is 4-hydroxy-tetrahydrodipicolinate synthase (306 aa).

Residue Thr-46 participates in pyruvate binding. Tyr-134 serves as the catalytic Proton donor/acceptor. Catalysis depends on Lys-162, which acts as the Schiff-base intermediate with substrate. Val-204 is a pyruvate binding site.

This sequence belongs to the DapA family. Homotetramer; dimer of dimers.

It is found in the cytoplasm. The catalysed reaction is L-aspartate 4-semialdehyde + pyruvate = (2S,4S)-4-hydroxy-2,3,4,5-tetrahydrodipicolinate + H2O + H(+). The protein operates within amino-acid biosynthesis; L-lysine biosynthesis via DAP pathway; (S)-tetrahydrodipicolinate from L-aspartate: step 3/4. Its function is as follows. Catalyzes the condensation of (S)-aspartate-beta-semialdehyde [(S)-ASA] and pyruvate to 4-hydroxy-tetrahydrodipicolinate (HTPA). This is 4-hydroxy-tetrahydrodipicolinate synthase from Synechococcus sp. (strain JA-2-3B'a(2-13)) (Cyanobacteria bacterium Yellowstone B-Prime).